The following is a 429-amino-acid chain: Phosphomethylpyrimidine synthase (429 aa).

Substrate contacts are provided by residues Asn-66, Met-95, Tyr-124, His-163, 185–187 (SRG), 226–229 (DGLR), and Glu-265. Residue His-269 coordinates Zn(2+). A substrate-binding site is contributed by Tyr-292. Residue His-333 coordinates Zn(2+). Cys-407, Cys-410, and Cys-414 together coordinate [4Fe-4S] cluster.

The protein belongs to the ThiC family. [4Fe-4S] cluster is required as a cofactor.

The catalysed reaction is 5-amino-1-(5-phospho-beta-D-ribosyl)imidazole + S-adenosyl-L-methionine = 4-amino-2-methyl-5-(phosphooxymethyl)pyrimidine + CO + 5'-deoxyadenosine + formate + L-methionine + 3 H(+). Its pathway is cofactor biosynthesis; thiamine diphosphate biosynthesis. Its function is as follows. Catalyzes the synthesis of the hydroxymethylpyrimidine phosphate (HMP-P) moiety of thiamine from aminoimidazole ribotide (AIR) in a radical S-adenosyl-L-methionine (SAM)-dependent reaction. This is Phosphomethylpyrimidine synthase from Pyrococcus furiosus (strain ATCC 43587 / DSM 3638 / JCM 8422 / Vc1).